Consider the following 359-residue polypeptide: 5-amino-6-(D-ribitylamino)uracil--L-tyrosine 4-hydroxyphenyl transferase (359 aa).

Residues 45-282 (VTYVVNANIN…VYAISRIFFK (238 aa)) enclose the Radical SAM core domain. [4Fe-4S] cluster contacts are provided by Cys-59, Cys-63, and Cys-66.

The protein belongs to the radical SAM superfamily. CofH family. In terms of assembly, consists of two subunits, CofG and CofH. The cofactor is [4Fe-4S] cluster.

It catalyses the reaction 5-amino-6-(D-ribitylamino)uracil + L-tyrosine + S-adenosyl-L-methionine = 5-amino-5-(4-hydroxybenzyl)-6-(D-ribitylimino)-5,6-dihydrouracil + 2-iminoacetate + 5'-deoxyadenosine + L-methionine + H(+). The protein operates within cofactor biosynthesis; coenzyme F0 biosynthesis. Functionally, catalyzes the radical-mediated synthesis of 5-amino-5-(4-hydroxybenzyl)-6-(D-ribitylimino)-5,6-dihydrouracil from 5-amino-6-(D-ribitylamino)uracil and L-tyrosine. The protein is 5-amino-6-(D-ribitylamino)uracil--L-tyrosine 4-hydroxyphenyl transferase of Methanococcus maripaludis (strain C7 / ATCC BAA-1331).